The chain runs to 357 residues: Phosphoserine aminotransferase (357 aa).

R41 provides a ligand contact to L-glutamate. Residues 75-76 (GT), W100, T150, D170, and Q193 contribute to the pyridoxal 5'-phosphate site. K194 carries the post-translational modification N6-(pyridoxal phosphate)lysine. Residue 234–235 (NT) participates in pyridoxal 5'-phosphate binding.

The protein belongs to the class-V pyridoxal-phosphate-dependent aminotransferase family. SerC subfamily. As to quaternary structure, homodimer. Pyridoxal 5'-phosphate serves as cofactor.

The protein localises to the cytoplasm. It catalyses the reaction O-phospho-L-serine + 2-oxoglutarate = 3-phosphooxypyruvate + L-glutamate. The enzyme catalyses 4-(phosphooxy)-L-threonine + 2-oxoglutarate = (R)-3-hydroxy-2-oxo-4-phosphooxybutanoate + L-glutamate. It functions in the pathway amino-acid biosynthesis; L-serine biosynthesis; L-serine from 3-phospho-D-glycerate: step 2/3. Its function is as follows. Catalyzes the reversible conversion of 3-phosphohydroxypyruvate to phosphoserine and of 3-hydroxy-2-oxo-4-phosphonooxybutanoate to phosphohydroxythreonine. This chain is Phosphoserine aminotransferase, found in Lactiplantibacillus plantarum (strain ATCC BAA-793 / NCIMB 8826 / WCFS1) (Lactobacillus plantarum).